A 511-amino-acid chain; its full sequence is 2'-acyl-2-O-sulfo-trehalose (hydroxy)phthioceranyltransferase PapA1 (511 aa).

Belongs to the PapA acyltransferase family.

It catalyses the reaction a (hydroxy)phthioceranyl-[(hydroxy)phthioceranic acid synthase] + 2'-palmitoyl/stearoyl-2-O-sulfo-alpha,alpha-trehalose = a 3'-(hydroxy)phthioceranyl-2'-palmitoyl/stearoyl-2-O-sulfo-alpha,alpha-trehalose + holo-[(hydroxy)phthioceranic acid synthase].. In terms of biological role, catalyzes the acylation of trehalose-2-sulfate-2'-palmitate (SL659) by adding the (hydroxy)phthioceranoyl group at the 3'-position to yield the diacylated intermediate 2-palmitoyl-3-(C43)-phthioceranyl-alpha, alpha'-D-trehalose-2'-sulfate (SL1278). The protein is 2'-acyl-2-O-sulfo-trehalose (hydroxy)phthioceranyltransferase PapA1 (papA1) of Mycobacterium bovis (strain BCG / Pasteur 1173P2).